The sequence spans 207 residues: dTTP/UTP pyrophosphatase (207 aa).

Aspartate 79 functions as the Proton acceptor in the catalytic mechanism.

Belongs to the Maf family. YhdE subfamily. Requires a divalent metal cation as cofactor.

The protein localises to the cytoplasm. It catalyses the reaction dTTP + H2O = dTMP + diphosphate + H(+). The enzyme catalyses UTP + H2O = UMP + diphosphate + H(+). Functionally, nucleoside triphosphate pyrophosphatase that hydrolyzes dTTP and UTP. May have a dual role in cell division arrest and in preventing the incorporation of modified nucleotides into cellular nucleic acids. The protein is dTTP/UTP pyrophosphatase of Nitrobacter hamburgensis (strain DSM 10229 / NCIMB 13809 / X14).